Consider the following 185-residue polypeptide: Elongation factor P (185 aa).

The protein belongs to the elongation factor P family.

The protein localises to the cytoplasm. It functions in the pathway protein biosynthesis; polypeptide chain elongation. Its function is as follows. Involved in peptide bond synthesis. Stimulates efficient translation and peptide-bond synthesis on native or reconstituted 70S ribosomes in vitro. Probably functions indirectly by altering the affinity of the ribosome for aminoacyl-tRNA, thus increasing their reactivity as acceptors for peptidyl transferase. The sequence is that of Elongation factor P from Caldanaerobacter subterraneus subsp. tengcongensis (strain DSM 15242 / JCM 11007 / NBRC 100824 / MB4) (Thermoanaerobacter tengcongensis).